The chain runs to 398 residues: 4-hydroxy-3-methylbut-2-enyl diphosphate reductase (398 aa).

Residue Cys-66 participates in [4Fe-4S] cluster binding. (2E)-4-hydroxy-3-methylbut-2-enyl diphosphate is bound at residue His-96. His-96 provides a ligand contact to dimethylallyl diphosphate. Position 96 (His-96) interacts with isopentenyl diphosphate. Cys-157 provides a ligand contact to [4Fe-4S] cluster. His-185 serves as a coordination point for (2E)-4-hydroxy-3-methylbut-2-enyl diphosphate. His-185 provides a ligand contact to dimethylallyl diphosphate. Isopentenyl diphosphate is bound at residue His-185. Glu-187 acts as the Proton donor in catalysis. Thr-250 lines the (2E)-4-hydroxy-3-methylbut-2-enyl diphosphate pocket. Cys-288 is a [4Fe-4S] cluster binding site. 4 residues coordinate (2E)-4-hydroxy-3-methylbut-2-enyl diphosphate: Ser-317, Ser-318, Asn-319, and Ser-380. Positions 317, 318, 319, and 380 each coordinate dimethylallyl diphosphate. Ser-317, Ser-318, Asn-319, and Ser-380 together coordinate isopentenyl diphosphate.

This sequence belongs to the IspH family. The cofactor is [4Fe-4S] cluster.

The catalysed reaction is isopentenyl diphosphate + 2 oxidized [2Fe-2S]-[ferredoxin] + H2O = (2E)-4-hydroxy-3-methylbut-2-enyl diphosphate + 2 reduced [2Fe-2S]-[ferredoxin] + 2 H(+). It carries out the reaction dimethylallyl diphosphate + 2 oxidized [2Fe-2S]-[ferredoxin] + H2O = (2E)-4-hydroxy-3-methylbut-2-enyl diphosphate + 2 reduced [2Fe-2S]-[ferredoxin] + 2 H(+). The protein operates within isoprenoid biosynthesis; dimethylallyl diphosphate biosynthesis; dimethylallyl diphosphate from (2E)-4-hydroxy-3-methylbutenyl diphosphate: step 1/1. It participates in isoprenoid biosynthesis; isopentenyl diphosphate biosynthesis via DXP pathway; isopentenyl diphosphate from 1-deoxy-D-xylulose 5-phosphate: step 6/6. Catalyzes the conversion of 1-hydroxy-2-methyl-2-(E)-butenyl 4-diphosphate (HMBPP) into a mixture of isopentenyl diphosphate (IPP) and dimethylallyl diphosphate (DMAPP). Acts in the terminal step of the DOXP/MEP pathway for isoprenoid precursor biosynthesis. This Prochlorococcus marinus (strain AS9601) protein is 4-hydroxy-3-methylbut-2-enyl diphosphate reductase.